A 132-amino-acid chain; its full sequence is Large ribosomal subunit protein uL14 (132 aa).

The protein belongs to the universal ribosomal protein uL14 family. In terms of assembly, part of the 50S ribosomal subunit. Forms a cluster with proteins L3 and L24e, part of which may contact the 16S rRNA in 2 intersubunit bridges.

Functionally, binds to 23S rRNA. Forms part of two intersubunit bridges in the 70S ribosome. This chain is Large ribosomal subunit protein uL14, found in Methanococcus aeolicus (strain ATCC BAA-1280 / DSM 17508 / OCM 812 / Nankai-3).